A 180-amino-acid chain; its full sequence is MSRIGKLPIKIADSVKVDIKDNFITVEGKRGKLSQEINSSIRVKIEDNNIIVERAFNDKQTRAFHGLYRSLIFNMVKGVSDGFSKSLTINGIGYRVEQQGNSLFFNLGYSTQFEYVIPEGINIRLDGNTKIAVEGIDKCRVGQVAAEIRSLKVPEPYKGKGIKYDNEVIRRKVGKSGVKK.

This sequence belongs to the universal ribosomal protein uL6 family. As to quaternary structure, part of the 50S ribosomal subunit.

In terms of biological role, this protein binds to the 23S rRNA, and is important in its secondary structure. It is located near the subunit interface in the base of the L7/L12 stalk, and near the tRNA binding site of the peptidyltransferase center. This is Large ribosomal subunit protein uL6 from Borrelia duttonii (strain Ly).